The chain runs to 159 residues: 2-C-methyl-D-erythritol 2,4-cyclodiphosphate synthase (159 aa).

A divalent metal cation contacts are provided by D8 and H10. 4-CDP-2-C-methyl-D-erythritol 2-phosphate is bound by residues 8–10 and 34–35; these read DVH and HS. H42 lines the a divalent metal cation pocket. Residues 56–58, 61–65, 100–106, 132–135, F139, and R142 each bind 4-CDP-2-C-methyl-D-erythritol 2-phosphate; these read DIG, FPDTD, AQAPKML, and TTTE.

The protein belongs to the IspF family. In terms of assembly, homotrimer. A divalent metal cation serves as cofactor.

The enzyme catalyses 4-CDP-2-C-methyl-D-erythritol 2-phosphate = 2-C-methyl-D-erythritol 2,4-cyclic diphosphate + CMP. The protein operates within isoprenoid biosynthesis; isopentenyl diphosphate biosynthesis via DXP pathway; isopentenyl diphosphate from 1-deoxy-D-xylulose 5-phosphate: step 4/6. In terms of biological role, involved in the biosynthesis of isopentenyl diphosphate (IPP) and dimethylallyl diphosphate (DMAPP), two major building blocks of isoprenoid compounds. Catalyzes the conversion of 4-diphosphocytidyl-2-C-methyl-D-erythritol 2-phosphate (CDP-ME2P) to 2-C-methyl-D-erythritol 2,4-cyclodiphosphate (ME-CPP) with a corresponding release of cytidine 5-monophosphate (CMP). In Escherichia coli O127:H6 (strain E2348/69 / EPEC), this protein is 2-C-methyl-D-erythritol 2,4-cyclodiphosphate synthase.